The chain runs to 87 residues: MYVIELALKLSPLPVSVQRKALADAEAVYQQVRKCLERGQPHLLELSCEKVEDKKVTVLVSEIVAVQLYEKTAATGGSKRPGFSFET.

This sequence belongs to the UPF0367 family.

In Prochlorococcus marinus (strain MIT 9303), this protein is UPF0367 protein P9303_26451.